Reading from the N-terminus, the 316-residue chain is Apolipoprotein E (316 aa).

Residues 1–18 form the signal peptide; that stretch reads MKVLWVALVITLLAGCQA. Tandem repeats lie at residues 79–100, 101–122, 123–144, 145–166, 167–188, 189–210, 211–232, and 233–254. The interval 79–254 is 8 X 22 AA approximate tandem repeats; that stretch reads VLMDETMKEV…HLEEMREQLE (176 aa). M142 carries the methionine sulfoxide modification. Positions 157 to 167 are LDL and other lipoprotein receptors binding; it reads HLRKLRKRLLR. Position 161 to 164 (161 to 164) interacts with heparin; sequence LRKR. Positions 209-289 are lipid-binding and lipoprotein association; sequence AATVGTLASQ…SWFEPLVEDM (81 aa). Heparin is bound at residue 228–235; it reads HQKLRGRV. Residues 265 to 316 form a homooligomerization region; the sequence is SQMRLQAEAFQARLKSWFEPLVEDMQRQWAGLVEKVQLAMATSSTSAPSENH. Positions 277-289 are specificity for association with VLDL; that stretch reads RLKSWFEPLVEDM.

This sequence belongs to the apolipoprotein A1/A4/E family. As to quaternary structure, homotetramer. May interact with ABCA1; functionally associated with ABCA1 in the biogenesis of HDLs. May interact with APP/A4 amyloid-beta peptide; the interaction is extremely stable in vitro but its physiological significance is unclear. May interact with MAPT. May interact with MAP2. In the cerebrospinal fluid, interacts with secreted SORL1. Interacts with PMEL; this allows the loading of PMEL luminal fragment on ILVs to induce fibril nucleation. Post-translationally, APOE exists as multiple glycosylated and sialylated glycoforms within cells and in plasma. The extent of glycosylation and sialylation are tissue and context specific. In terms of processing, glycated in plasma VLDL. Phosphorylated by FAM20C in the extracellular medium.

The protein resides in the secreted. Its subcellular location is the extracellular space. The protein localises to the extracellular matrix. It is found in the extracellular vesicle. It localises to the endosome. The protein resides in the multivesicular body. Functionally, APOE is an apolipoprotein, a protein associating with lipid particles, that mainly functions in lipoprotein-mediated lipid transport between organs via the plasma and interstitial fluids. APOE is a core component of plasma lipoproteins and is involved in their production, conversion and clearance. Apolipoproteins are amphipathic molecules that interact both with lipids of the lipoprotein particle core and the aqueous environment of the plasma. As such, APOE associates with chylomicrons, chylomicron remnants, very low density lipoproteins (VLDL) and intermediate density lipoproteins (IDL) but shows a preferential binding to high-density lipoproteins (HDL). It also binds a wide range of cellular receptors including the LDL receptor/LDLR and the very low-density lipoprotein receptor/VLDLR that mediate the cellular uptake of the APOE-containing lipoprotein particles. Finally, APOE also has a heparin-binding activity and binds heparan-sulfate proteoglycans on the surface of cells, a property that supports the capture and the receptor-mediated uptake of APOE-containing lipoproteins by cells. The sequence is that of Apolipoprotein E (APOE) from Lipotes vexillifer (Yangtze river dolphin).